The sequence spans 391 residues: PPE family protein PPE15 (391 aa).

Residues 312 to 367 (LGEATLVGRLSVPAAWSTAAPATTAGATALEGSGWTVAAEEAGPVTGMMPGMASAA) form a eukaryotic-like SH3 domain region.

It belongs to the mycobacterial PPE family. As to quaternary structure, forms a heterodimer with PE8. The dimer forms a 1:1:1 heterotrimeric complex with EspG5. PPE15 interacts directly with EspG5. Interacts via the C-terminal region with host Toll-like receptor 4 (TLR4). Interacts, also via the C-terminal region, with two cytosolic subunits of the host NOX complex, p47phox (NCF1) and p67phox (NCF2).

It is found in the secreted. Its subcellular location is the host mitochondrion. Functionally, may play a critical role in the homeostasis of triacylglycerol-containing lipid droplets in M.tuberculosis and influence the entry of the pathogen into a dormant state. Is recognized by host TLR4 receptor at the macrophage cell surface, which modulates the host immune response, induces mitochondrial stress and perturbations, and induces macrophage apoptosis leading to pathogen persistence. Also downregulates NOX-mediated reactive oxygen species (ROS) generation in THP1 macrophages, which increases intracellular survival of bacteria. PPE15 interacts with two subunits of the host NADPH oxidase (NOX) complex in the cytosol of macrophages and prevents their migration to the membrane, which inhibits the assembly of the NOX complex at the plasma membrane of THP1 macrophages. This leads to reduced NOX activity and diminished ROS generation. The polypeptide is PPE family protein PPE15 (PPE15) (Mycobacterium tuberculosis (strain CDC 1551 / Oshkosh)).